Here is a 347-residue protein sequence, read N- to C-terminus: N-acetyl-gamma-glutamyl-phosphate reductase (347 aa).

Residue Cys155 is part of the active site.

This sequence belongs to the NAGSA dehydrogenase family. Type 1 subfamily.

The protein resides in the cytoplasm. The catalysed reaction is N-acetyl-L-glutamate 5-semialdehyde + phosphate + NADP(+) = N-acetyl-L-glutamyl 5-phosphate + NADPH + H(+). Its pathway is amino-acid biosynthesis; L-arginine biosynthesis; N(2)-acetyl-L-ornithine from L-glutamate: step 3/4. Its function is as follows. Catalyzes the NADPH-dependent reduction of N-acetyl-5-glutamyl phosphate to yield N-acetyl-L-glutamate 5-semialdehyde. The protein is N-acetyl-gamma-glutamyl-phosphate reductase of Akkermansia muciniphila (strain ATCC BAA-835 / DSM 22959 / JCM 33894 / BCRC 81048 / CCUG 64013 / CIP 107961 / Muc).